The chain runs to 428 residues: MSTVVVVGTQWGDEGKGKITDYLAESAEVVARYQGGNNAGHTIIFDGNKYKLHLIPSGIFYSDKTCVIGNGMVIDPKALVKELEYIHSFGFSTSNLKISDRAHVILPYHIKLDGVEEDSRGANKIGTTRKGIGPAYMDKAARIGIRIADLLDRDEFARKLERNLAEKNMLLEKLYNTTGFELKEILDEYLALAEIIRPYVTDTSVVLNDSIDSGNRVLFEGAQGVLLDIDQGTYPYVTSSNPIAGGVTIGSGVGPTKIHQVIGVAKAYTTRVGDGPFLTELNDATGDHIREVGFEYGTTTGRPRRVGWFDSVVVRHARRVSGITGLAITKLDTLSGIETLRICTAYKYNGEIIESFPANLNLLAKCEPVYEELPGWTEDITGIRNLNDLPENARHYIERITQLTGIPMSIFSVGPDREQTVVVRGIYG.

GTP contacts are provided by residues 12–18 (GDEGKGK) and 40–42 (GHT). Asp-13 serves as the catalytic Proton acceptor. Residues Asp-13 and Gly-40 each contribute to the Mg(2+) site. IMP is bound by residues 13–16 (DEGK), 38–41 (NAGH), Thr-128, Arg-142, Gln-223, Thr-238, and Arg-302. Residue His-41 is the Proton donor of the active site. A substrate-binding site is contributed by 298–304 (TTTGRPR). GTP is bound by residues Arg-304, 330 to 332 (KLD), and 412 to 414 (SVG).

The protein belongs to the adenylosuccinate synthetase family. Homodimer. Mg(2+) serves as cofactor.

Its subcellular location is the cytoplasm. The enzyme catalyses IMP + L-aspartate + GTP = N(6)-(1,2-dicarboxyethyl)-AMP + GDP + phosphate + 2 H(+). It functions in the pathway purine metabolism; AMP biosynthesis via de novo pathway; AMP from IMP: step 1/2. In terms of biological role, plays an important role in the de novo pathway of purine nucleotide biosynthesis. Catalyzes the first committed step in the biosynthesis of AMP from IMP. This chain is Adenylosuccinate synthetase, found in Brevibacillus brevis (strain 47 / JCM 6285 / NBRC 100599).